The primary structure comprises 98 residues: NADH-ubiquinone oxidoreductase chain 4L (98 aa).

3 helical membrane-spanning segments follow: residues 1-21 (MTLIHMNILMAFSMSLVGLLM), 29-49 (ALLCLEGMMLSLFILAALTIL), and 61-81 (IILLVFAACEAAIGLALLVMV).

Belongs to the complex I subunit 4L family. As to quaternary structure, core subunit of respiratory chain NADH dehydrogenase (Complex I) which is composed of 45 different subunits.

The protein resides in the mitochondrion inner membrane. The catalysed reaction is a ubiquinone + NADH + 5 H(+)(in) = a ubiquinol + NAD(+) + 4 H(+)(out). Functionally, core subunit of the mitochondrial membrane respiratory chain NADH dehydrogenase (Complex I) which catalyzes electron transfer from NADH through the respiratory chain, using ubiquinone as an electron acceptor. Part of the enzyme membrane arm which is embedded in the lipid bilayer and involved in proton translocation. This is NADH-ubiquinone oxidoreductase chain 4L (MT-ND4L) from Balaenoptera omurai (Omura's baleen whale).